The sequence spans 220 residues: N-(5'-phosphoribosyl)anthranilate isomerase (220 aa).

It belongs to the TrpF family.

It catalyses the reaction N-(5-phospho-beta-D-ribosyl)anthranilate = 1-(2-carboxyphenylamino)-1-deoxy-D-ribulose 5-phosphate. Its pathway is amino-acid biosynthesis; L-tryptophan biosynthesis; L-tryptophan from chorismate: step 3/5. In Bordetella petrii (strain ATCC BAA-461 / DSM 12804 / CCUG 43448), this protein is N-(5'-phosphoribosyl)anthranilate isomerase.